The following is a 313-amino-acid chain: MEKRKIILDCEPGHDDAIAMMMAAKHPAIDLLGITIVAGNQTLDKTLINGLNVCQKLEINVPVYAGMPQPIMRKQIVADNIHGETGLDGPVFEPLTRQAESTHAVKYIIDTLMASDGDITLVPVGPLSNIAVAMRMQPAILPKIREIVLMGGAYGTGNFTPSAEFNIFADPEAARVVFTSGVPLVMMGLDLTNQTVCTPDVIARMERVGGPAGELFSDIMNFTLKTQFEYYGLAGGPVHDATCIGYLINPDGIKTQDMYVEVDVNSGPCYGRTVCDELGVLGKPANTKVGITIDTDWFWGLVEECVRGYIKTH.

Glu11 functions as the Proton acceptor in the catalytic mechanism. Ca(2+)-binding residues include Glu11, Asp16, and Val124. Positions 227 and 239 each coordinate substrate. Asp240 serves as a coordination point for Ca(2+).

This sequence belongs to the IUNH family. RihB subfamily. Homotetramer. Requires Ca(2+) as cofactor.

It catalyses the reaction a pyrimidine ribonucleoside + H2O = a pyrimidine nucleobase + D-ribose. Its function is as follows. Hydrolyzes cytidine or uridine to ribose and cytosine or uracil, respectively. Has a clear preference for cytidine over uridine. Strictly specific for ribonucleosides. The polypeptide is Pyrimidine-specific ribonucleoside hydrolase RihB (Shigella flexneri serotype 5b (strain 8401)).